The sequence spans 434 residues: Putative ZDHHC-type palmitoyltransferase 1 (434 aa).

2 consecutive transmembrane segments (helical) span residues 25 to 45 and 53 to 73; these read AYFIVAMILMLIPEIPFLIFV and ITAAIYPVSIYFWIASYIFLI. A DHHC domain is found at 115-165; the sequence is KWCETCCLYRPPRANHCGICNNCVERFDHHCPWVGNCIGRRNYQTFLYFLY. Cys145 (S-palmitoyl cysteine intermediate) is an active-site residue. The helical transmembrane segment at 160-180 threads the bilayer; that stretch reads FLYFLYSLGFLCIWIMGFCVA. N-linked (GlcNAc...) asparagine glycosylation is found at Asn207, Asn216, Asn274, Asn346, Asn362, Asn373, Asn381, Asn387, and Asn393. Residues 262–330 are disordered; it reads TIPTPNNING…ISPPQMLQRQ (69 aa). Low complexity predominate over residues 267–316; it reads NNINGNNNNSINNNNNNNNNNNNNNNNNNNNNNNNNNINNGNSGGTTNNG. Residues 365–434 form a disordered region; it reads TISEDKPKNL…SLNHELQVNV (70 aa). Low complexity predominate over residues 373 to 387; it reads NLSNSNNNNNTNNKN. Over residues 409 to 419 the composition is skewed to basic and acidic residues; that stretch reads DDFKSDNDKEI. Residue Asn420 is glycosylated (N-linked (GlcNAc...) asparagine). Over residues 420-434 the composition is skewed to polar residues; it reads NSSSLSLNHELQVNV.

Belongs to the DHHC palmitoyltransferase family.

It is found in the membrane. The enzyme catalyses L-cysteinyl-[protein] + hexadecanoyl-CoA = S-hexadecanoyl-L-cysteinyl-[protein] + CoA. This is Putative ZDHHC-type palmitoyltransferase 1 from Dictyostelium discoideum (Social amoeba).